The sequence spans 269 residues: Major capsid protein P2 (269 aa).

As to quaternary structure, homotrimer.

The protein localises to the virion. In terms of biological role, major capsid protein. In Pseudoalteromonas phage PM2 (Bacteriophage PM2), this protein is Major capsid protein P2 (II).